The following is a 1374-amino-acid chain: Probable ATP-dependent RNA helicase spindle-E (1374 aa).

The Helicase ATP-binding domain maps to 46–212 (LARIRENPVI…FKTPKKVGYL (167 aa)). 59 to 66 (GPTGCGKT) provides a ligand contact to ATP. Positions 158-161 (DEIH) match the DEAH box motif. Residues 265–447 (VCDRLIENMH…NVILKAKLLE (183 aa)) form the Helicase C-terminal domain. The 66-residue stretch at 866 to 931 (QFAVGQMVAA…RKLDGPLAYM (66 aa)) folds into the Tudor domain.

The protein belongs to the DEAD box helicase family. DEAH subfamily.

It is found in the cytoplasm. It carries out the reaction ATP + H2O = ADP + phosphate + H(+). In terms of biological role, probable ATP-binding RNA helicase which plays a central role during gametogenesis by repressing transposable elements and preventing their mobilization, which is essential for the germline integrity. Acts via the piRNA metabolic process, which mediates the repression of transposable elements during meiosis by forming complexes composed of piRNAs and Piwi proteins and govern the methylation and subsequent repression of transposons. The protein is Probable ATP-dependent RNA helicase spindle-E (spn-E) of Aedes aegypti (Yellowfever mosquito).